The chain runs to 218 residues: Large ribosomal subunit protein bL25 (218 aa).

The protein belongs to the bacterial ribosomal protein bL25 family. CTC subfamily. In terms of assembly, part of the 50S ribosomal subunit; part of the 5S rRNA/L5/L18/L25 subcomplex. Contacts the 5S rRNA. Binds to the 5S rRNA independently of L5 and L18.

In terms of biological role, this is one of the proteins that binds to the 5S RNA in the ribosome where it forms part of the central protuberance. The sequence is that of Large ribosomal subunit protein bL25 from Polaromonas naphthalenivorans (strain CJ2).